Here is a 342-residue protein sequence, read N- to C-terminus: WW domain binding protein 1-like (342 aa).

Residues 42–62 form a helical membrane-spanning segment; sequence LWWFWLVWTIIIILSCCCVCH. Disordered stretches follow at residues 133 to 247 and 292 to 320; these read LPPQ…RRFT and PGDEEEGLCQSSEEQAREPGHPHLPRPPA. Low complexity predominate over residues 158-173; that stretch reads SSPLSEPSRSSTRPPS. Serine 173 carries the post-translational modification Phosphoserine. Residues 212-240 show a composition bias toward basic and acidic residues; that stretch reads LDKDAECREELLKDDSSEHGAPDSKEKTP.

It localises to the membrane. The polypeptide is WW domain binding protein 1-like (WBP1L) (Homo sapiens (Human)).